The sequence spans 188 residues: Peptidyl-tRNA hydrolase (188 aa).

Tyr-14 is a tRNA binding site. Residue His-19 is the Proton acceptor of the active site. 2 residues coordinate tRNA: Tyr-60 and Asn-62.

This sequence belongs to the PTH family. In terms of assembly, monomer.

It is found in the cytoplasm. The enzyme catalyses an N-acyl-L-alpha-aminoacyl-tRNA + H2O = an N-acyl-L-amino acid + a tRNA + H(+). Hydrolyzes ribosome-free peptidyl-tRNAs (with 1 or more amino acids incorporated), which drop off the ribosome during protein synthesis, or as a result of ribosome stalling. Functionally, catalyzes the release of premature peptidyl moieties from peptidyl-tRNA molecules trapped in stalled 50S ribosomal subunits, and thus maintains levels of free tRNAs and 50S ribosomes. The chain is Peptidyl-tRNA hydrolase from Mycoplasmopsis agalactiae (strain NCTC 10123 / CIP 59.7 / PG2) (Mycoplasma agalactiae).